The sequence spans 251 residues: Regulator of G-protein signaling 9-binding protein C (251 aa).

The Cytoplasmic portion of the chain corresponds to 1–230; it reads MPLQNVKVAD…NSKGCCSDGQ (230 aa). Coiled coils occupy residues 53 to 94 and 158 to 187; these read LRDE…ELER and ANKASLEYQEIEEEILKVDNMITDMEMKVN. The helical; Anchor for type IV membrane protein transmembrane segment at 231 to 250 threads the bilayer; that stretch reads LIVSLLLCGTALVAITLYSI. A topological domain (extracellular) is located at residue L251.

Belongs to the RGS7BP/RGS9BP family.

Its subcellular location is the membrane. Its function is as follows. Regulator of G protein-coupled receptor (GPCR) signaling. Probably acts by regulating the activity of some 'R7' family protein (RGS6, RGS7, RGS9 and/or RGS11). This is Regulator of G-protein signaling 9-binding protein C (rgs9bp-c) from Xenopus laevis (African clawed frog).